A 78-amino-acid chain; its full sequence is Major outer membrane lipoprotein Lpp (78 aa).

The first 20 residues, 1–20 (MNRTKLVLGAVILGSTLLAG), serve as a signal peptide directing secretion. Cys21 is lipidated: N-palmitoyl cysteine. Cys21 carries S-diacylglycerol cysteine lipidation. 2 repeats span residues 24-34 (NAKIDQLSSDV) and 38-48 (NAKVDQLSNDV). The stretch at 27 to 75 (IDQLSSDVQTLNAKVDQLSNDVNAIRSDVQAAKDDAARANQRLDNQVRT) forms a coiled coil. The residue at position 78 (Lys78) is an N6-murein peptidoglycan lysine.

Belongs to the Lpp family. In terms of assembly, homotrimer.

It is found in the cell outer membrane. The protein resides in the secreted. The protein localises to the cell wall. Functionally, a highly abundant outer membrane lipoprotein that controls the distance between the inner and outer membranes. The only protein known to be covalently linked to the peptidoglycan network (PGN). Also non-covalently binds the PGN. The link between the cell outer membrane and PGN contributes to maintenance of the structural and functional integrity of the cell envelope, and maintains the correct distance between the PGN and the outer membrane. This Pectobacterium atrosepticum (strain SCRI 1043 / ATCC BAA-672) (Erwinia carotovora subsp. atroseptica) protein is Major outer membrane lipoprotein Lpp.